The primary structure comprises 404 residues: Starvation-sensing protein RspA (404 aa).

It belongs to the mandelate racemase/muconate lactonizing enzyme family.

In terms of biological role, probably involved in the degradation of homoserine lactone (HSL) or of a metabolite of HSL that signals starvation. The polypeptide is Starvation-sensing protein RspA (Escherichia coli (strain K12)).